Reading from the N-terminus, the 624-residue chain is Probable Xaa-Pro aminopeptidase P (624 aa).

Residues D414, D425, E530, and E544 each coordinate Mn(2+).

This sequence belongs to the peptidase M24B family. Mn(2+) serves as cofactor.

The catalysed reaction is Release of any N-terminal amino acid, including proline, that is linked to proline, even from a dipeptide or tripeptide.. Functionally, catalyzes the removal of a penultimate prolyl residue from the N-termini of peptides. The polypeptide is Probable Xaa-Pro aminopeptidase P (AMPP) (Chaetomium globosum (strain ATCC 6205 / CBS 148.51 / DSM 1962 / NBRC 6347 / NRRL 1970) (Soil fungus)).